Reading from the N-terminus, the 141-residue chain is Large ribosomal subunit protein uL11c (141 aa).

Belongs to the universal ribosomal protein uL11 family. Part of the ribosomal stalk of the 50S ribosomal subunit. Interacts with L10 and the large rRNA to form the base of the stalk. L10 forms an elongated spine to which L12 dimers bind in a sequential fashion forming a multimeric L10(L12)X complex.

The protein localises to the plastid. It localises to the cyanelle. Functionally, forms part of the ribosomal stalk which helps the ribosome interact with GTP-bound translation factors. The polypeptide is Large ribosomal subunit protein uL11c (Cyanophora paradoxa).